Here is a 363-residue protein sequence, read N- to C-terminus: UV excision repair protein RAD23 homolog A (363 aa).

Positions 1–81 (MAVTITLKTL…VVVMVTKTKA (81 aa)) constitute a Ubiquitin-like domain. Positions 81–160 (AGQGTSAPPE…EDAASTLVTG (80 aa)) are disordered. Low complexity predominate over residues 85 to 103 (TSAPPEASPTAAPESSTSF). Lysine 122 is covalently cross-linked (Glycyl lysine isopeptide (Lys-Gly) (interchain with G-Cter in ubiquitin)). Phosphoserine occurs at positions 123, 128, 133, 136, and 138. Residues 126–147 (EESAPTTSPESVSGSVPSSGSS) show a composition bias toward low complexity. A UBA 1 domain is found at 161-201 (SEYETMLTEIMSMGYERERVVAALRASYNNPHRAVEYLLTG). The segment at 203-227 (PGSPEPEHGSVQESQVSEQPATEAA) is disordered. Phosphoserine is present on serine 205. The segment covering 213–222 (VQESQVSEQP) has biased composition (polar residues). Residues serine 295 and serine 357 each carry the phosphoserine modification. In terms of domain architecture, UBA 2 spans 318 to 358 (PQEKEAIERLKALGFPESLVIQAYFACEKNENLAANFLLSQ). The HIV-1 vpr binding stretch occupies residues 319–363 (QEKEAIERLKALGFPESLVIQAYFACEKNENLAANFLLSQNFDDE).

Belongs to the RAD23 family. In terms of assembly, interacts with XPC; the interaction is suggesting the existence of a functional equivalent variant XPC complex. Interacts with PSMD4 and PSMC5. Interacts with ATXN3. Interacts with UBQLN2. (Microbial infection) Interacts with HIV-1 Vpr.

It localises to the nucleus. Multiubiquitin chain receptor involved in modulation of proteasomal degradation. Binds to 'Lys-48'-linked polyubiquitin chains in a length-dependent manner and with a lower affinity to 'Lys-63'-linked polyubiquitin chains. Proposed to be capable to bind simultaneously to the 26S proteasome and to polyubiquitinated substrates and to deliver ubiquitinated proteins to the proteasome. In terms of biological role, involved in nucleotide excision repair and is thought to be functional equivalent for RAD23B in global genome nucleotide excision repair (GG-NER) by association with XPC. In vitro, the XPC:RAD23A dimer has NER activity. Can stabilize XPC. Functionally, (Microbial infection) Involved in Vpr-dependent replication of HIV-1 in non-proliferating cells and primary macrophages. Required for the association of HIV-1 Vpr with the host proteasome. The chain is UV excision repair protein RAD23 homolog A (RAD23A) from Homo sapiens (Human).